The following is a 104-amino-acid chain: Large ribosomal subunit protein bL21 (104 aa).

Belongs to the bacterial ribosomal protein bL21 family. Part of the 50S ribosomal subunit. Contacts protein L20.

Functionally, this protein binds to 23S rRNA in the presence of protein L20. The sequence is that of Large ribosomal subunit protein bL21 from Gluconacetobacter diazotrophicus (strain ATCC 49037 / DSM 5601 / CCUG 37298 / CIP 103539 / LMG 7603 / PAl5).